Consider the following 450-residue polypeptide: 3-phosphoshikimate 1-carboxyvinyltransferase (450 aa).

The disordered stretch occupies residues 1–26 (MSGHGTPIPMTSRRASPLKGEAHVPG). 3-phosphoshikimate is bound by residues K28, S29, and R33. Residue K28 coordinates phosphoenolpyruvate. Residues G101 and R129 each contribute to the phosphoenolpyruvate site. 3-phosphoshikimate is bound by residues S174, Q176, D327, and K354. Q176 is a phosphoenolpyruvate binding site. Catalysis depends on D327, which acts as the Proton acceptor. Phosphoenolpyruvate is bound by residues R358 and R403.

It belongs to the EPSP synthase family. In terms of assembly, monomer.

It is found in the cytoplasm. It catalyses the reaction 3-phosphoshikimate + phosphoenolpyruvate = 5-O-(1-carboxyvinyl)-3-phosphoshikimate + phosphate. Its pathway is metabolic intermediate biosynthesis; chorismate biosynthesis; chorismate from D-erythrose 4-phosphate and phosphoenolpyruvate: step 6/7. Functionally, catalyzes the transfer of the enolpyruvyl moiety of phosphoenolpyruvate (PEP) to the 5-hydroxyl of shikimate-3-phosphate (S3P) to produce enolpyruvyl shikimate-3-phosphate and inorganic phosphate. This Ruegeria sp. (strain TM1040) (Silicibacter sp.) protein is 3-phosphoshikimate 1-carboxyvinyltransferase.